The sequence spans 553 residues: Dihydroxy-acid dehydratase (553 aa).

C49 contributes to the [2Fe-2S] cluster binding site. D81 serves as a coordination point for Mg(2+). A [2Fe-2S] cluster-binding site is contributed by C122. Mg(2+) is bound by residues D123 and K124. K124 is modified (N6-carboxylysine). A [2Fe-2S] cluster-binding site is contributed by C194. E444 is a binding site for Mg(2+). S470 functions as the Proton acceptor in the catalytic mechanism.

It belongs to the IlvD/Edd family. In terms of assembly, homodimer. The cofactor is [2Fe-2S] cluster. It depends on Mg(2+) as a cofactor.

The catalysed reaction is (2R)-2,3-dihydroxy-3-methylbutanoate = 3-methyl-2-oxobutanoate + H2O. It catalyses the reaction (2R,3R)-2,3-dihydroxy-3-methylpentanoate = (S)-3-methyl-2-oxopentanoate + H2O. It functions in the pathway amino-acid biosynthesis; L-isoleucine biosynthesis; L-isoleucine from 2-oxobutanoate: step 3/4. The protein operates within amino-acid biosynthesis; L-valine biosynthesis; L-valine from pyruvate: step 3/4. In terms of biological role, functions in the biosynthesis of branched-chain amino acids. Catalyzes the dehydration of (2R,3R)-2,3-dihydroxy-3-methylpentanoate (2,3-dihydroxy-3-methylvalerate) into 2-oxo-3-methylpentanoate (2-oxo-3-methylvalerate) and of (2R)-2,3-dihydroxy-3-methylbutanoate (2,3-dihydroxyisovalerate) into 2-oxo-3-methylbutanoate (2-oxoisovalerate), the penultimate precursor to L-isoleucine and L-valine, respectively. The sequence is that of Dihydroxy-acid dehydratase from Aeropyrum pernix (strain ATCC 700893 / DSM 11879 / JCM 9820 / NBRC 100138 / K1).